The chain runs to 231 residues: Secreted LysM effector LysM13 (231 aa).

Residues 1-19 form the signal peptide; sequence MVFLSLKYALSGLAATAAA. Residues Asn30, Asn34, Asn77, Asn100, Asn130, Asn201, and Asn226 are each glycosylated (N-linked (GlcNAc...) asparagine). Residues 38 to 82 form the LysM domain; it reads TTYTTTSEDTIFTVARKFDRGPCDIARYNRMIDAEHIFANFTLRI.

This sequence belongs to the secreted LysM effector family.

It localises to the secreted. Secreted LysM effector that might have a role in sequestration of chitin oligosaccharides (breakdown products of fungal cell walls that are released during invasion and act as triggers of host immunity) to dampen host defense. The protein is Secreted LysM effector LysM13 of Penicillium expansum (Blue mold rot fungus).